Consider the following 253-residue polypeptide: Imidazole glycerol phosphate synthase subunit HisF (253 aa).

Residues aspartate 11 and aspartate 130 contribute to the active site.

It belongs to the HisA/HisF family. Heterodimer of HisH and HisF.

Its subcellular location is the cytoplasm. It carries out the reaction 5-[(5-phospho-1-deoxy-D-ribulos-1-ylimino)methylamino]-1-(5-phospho-beta-D-ribosyl)imidazole-4-carboxamide + L-glutamine = D-erythro-1-(imidazol-4-yl)glycerol 3-phosphate + 5-amino-1-(5-phospho-beta-D-ribosyl)imidazole-4-carboxamide + L-glutamate + H(+). The protein operates within amino-acid biosynthesis; L-histidine biosynthesis; L-histidine from 5-phospho-alpha-D-ribose 1-diphosphate: step 5/9. In terms of biological role, IGPS catalyzes the conversion of PRFAR and glutamine to IGP, AICAR and glutamate. The HisF subunit catalyzes the cyclization activity that produces IGP and AICAR from PRFAR using the ammonia provided by the HisH subunit. The protein is Imidazole glycerol phosphate synthase subunit HisF of Lysinibacillus sphaericus (strain C3-41).